We begin with the raw amino-acid sequence, 507 residues long: Serine/threonine-protein kinase BSK11 (507 aa).

Residue G2 is the site of N-myristoyl glycine attachment. The span at 16–26 (DKKITSDDLSG) shows a compositional bias: basic and acidic residues. Residues 16-44 (DKKITSDDLSGRRGKGAKRGNRHRHANIN) are disordered. Over residues 27-41 (RRGKGAKRGNRHRHA) the composition is skewed to basic residues. Residues 75–332 (NAVVSVCSDQ…GDIISVITTL (258 aa)) form the Protein kinase domain. ATP contacts are provided by residues 81-89 (CSDQEPNLV) and K106. D200 (proton acceptor) is an active-site residue.

Belongs to the protein kinase superfamily. Ser/Thr protein kinase family. Interacts with BRI1, ASK7/BIN2, BSK1, BSK6 and BSK8. In terms of processing, phosphorylated by BRI1, ASK7/BIN2 and ASK9/BIL2.

The protein localises to the cell membrane. The catalysed reaction is L-seryl-[protein] + ATP = O-phospho-L-seryl-[protein] + ADP + H(+). It catalyses the reaction L-threonyl-[protein] + ATP = O-phospho-L-threonyl-[protein] + ADP + H(+). In terms of biological role, probable serine/threonine kinase that acts as a positive regulator of brassinosteroid (BR) signaling downstream of the receptor kinase BRI1. The polypeptide is Serine/threonine-protein kinase BSK11 (Arabidopsis thaliana (Mouse-ear cress)).